The chain runs to 425 residues: Serine--tRNA ligase (425 aa).

Position 228–230 (228–230 (TAE)) interacts with L-serine. 259–261 (RSE) is an ATP binding site. Glutamate 282 lines the L-serine pocket. 346-349 (EIAS) serves as a coordination point for ATP. Serine 382 is an L-serine binding site.

This sequence belongs to the class-II aminoacyl-tRNA synthetase family. Type-1 seryl-tRNA synthetase subfamily. In terms of assembly, homodimer. The tRNA molecule binds across the dimer.

Its subcellular location is the cytoplasm. The catalysed reaction is tRNA(Ser) + L-serine + ATP = L-seryl-tRNA(Ser) + AMP + diphosphate + H(+). The enzyme catalyses tRNA(Sec) + L-serine + ATP = L-seryl-tRNA(Sec) + AMP + diphosphate + H(+). Its pathway is aminoacyl-tRNA biosynthesis; selenocysteinyl-tRNA(Sec) biosynthesis; L-seryl-tRNA(Sec) from L-serine and tRNA(Sec): step 1/1. Its function is as follows. Catalyzes the attachment of serine to tRNA(Ser). Is also able to aminoacylate tRNA(Sec) with serine, to form the misacylated tRNA L-seryl-tRNA(Sec), which will be further converted into selenocysteinyl-tRNA(Sec). The polypeptide is Serine--tRNA ligase (Rickettsia canadensis (strain McKiel)).